A 496-amino-acid polypeptide reads, in one-letter code: Cytochrome P450 71A15 (496 aa).

A helical membrane pass occupies residues 3–23; it reads IIIISLCLATILAFLLLKPLL. Residue cysteine 439 coordinates heme.

The protein belongs to the cytochrome P450 family. Requires heme as cofactor.

It localises to the membrane. The sequence is that of Cytochrome P450 71A15 (CYP71A15) from Arabidopsis thaliana (Mouse-ear cress).